The following is a 577-amino-acid chain: Arginine--tRNA ligase (577 aa).

Positions 122-132 match the 'HIGH' region motif; the sequence is PNVAKEMHVGH.

Belongs to the class-I aminoacyl-tRNA synthetase family. In terms of assembly, monomer.

It is found in the cytoplasm. It carries out the reaction tRNA(Arg) + L-arginine + ATP = L-arginyl-tRNA(Arg) + AMP + diphosphate. This Klebsiella pneumoniae subsp. pneumoniae (strain ATCC 700721 / MGH 78578) protein is Arginine--tRNA ligase.